Consider the following 194-residue polypeptide: MRLILLGPPGAGKGTQAGLLTKKHGIPQLSTGDMLRAAVAQQSEIGKRAKAVMDAGQLVSDEIVNQIVSERIDAPDCANGFILDGYPRTVPQAQALSQMLSGKGLKLDAVIELKVDENALVKRMESRVAETIAKGGQVRSDDNPEAFRKRLVEYREKTAPLSSYYAGTGELRVINGMAPVEEVTAEIERILVPA.

10–15 (GAGKGT) contributes to the ATP binding site. The tract at residues 30-59 (STGDMLRAAVAQQSEIGKRAKAVMDAGQLV) is NMP. Residues Thr-31, Arg-36, 57-59 (QLV), 85-88 (GYPR), and Gln-92 contribute to the AMP site. The LID stretch occupies residues 126 to 142 (SRVAETIAKGGQVRSDD). Arg-127 contributes to the ATP binding site. The AMP site is built by Arg-139 and Arg-150. Residue Ala-178 coordinates ATP.

It belongs to the adenylate kinase family. Monomer.

Its subcellular location is the cytoplasm. The catalysed reaction is AMP + ATP = 2 ADP. It participates in purine metabolism; AMP biosynthesis via salvage pathway; AMP from ADP: step 1/1. Its function is as follows. Catalyzes the reversible transfer of the terminal phosphate group between ATP and AMP. Plays an important role in cellular energy homeostasis and in adenine nucleotide metabolism. The chain is Adenylate kinase from Brucella canis (strain ATCC 23365 / NCTC 10854 / RM-666).